The sequence spans 485 residues: UDP-N-acetylmuramate--L-alanine ligase (485 aa).

120 to 126 (GSHGKTT) lines the ATP pocket.

The protein belongs to the MurCDEF family.

Its subcellular location is the cytoplasm. The catalysed reaction is UDP-N-acetyl-alpha-D-muramate + L-alanine + ATP = UDP-N-acetyl-alpha-D-muramoyl-L-alanine + ADP + phosphate + H(+). It participates in cell wall biogenesis; peptidoglycan biosynthesis. Its function is as follows. Cell wall formation. The chain is UDP-N-acetylmuramate--L-alanine ligase from Rickettsia conorii (strain ATCC VR-613 / Malish 7).